The chain runs to 247 residues: Lysosomal membrane ascorbate-dependent ferrireductase CYB561A3 (247 aa).

Residues 1-3 (MRG) lie on the Cytoplasmic side of the membrane. The chain crosses the membrane as a helical span at residues 4-24 (IVGFYITYLLCLILGIACVVL). The region spanning 13–223 (LCLILGIACV…FGLVVLKILS (211 aa)) is the Cytochrome b561 domain. Over 25–46 (VVHWNFMYRDGFAWDGSSKNFN) the chain is Lumenal. The helical transmembrane segment at 47–67 (WHPVLMVTGMLVLYGNAAVVY) threads the bilayer. Residues H48 and R68 each contribute to the heme b site. The Cytoplasmic portion of the chain corresponds to 68-82 (RIPLTWGHNKLPWKL). 2 residues coordinate L-ascorbate: K77 and K81. A helical transmembrane segment spans residues 83-103 (LHAGLLLLSFIFSVIGLCAVF). Heme b contacts are provided by residues H84, 113 to 116 (NLYS), and H118. Residues 104-120 (NFHNVHHTANLYSLHSW) lie on the Lumenal side of the membrane. The chain crosses the membrane as a helical span at residues 121–141 (VGICTAALFTAQWVMGFTSFL). The Cytoplasmic portion of the chain corresponds to 142-155 (LPCTPMAVRAFVKP). R150 contributes to the L-ascorbate binding site. A helical transmembrane segment spans residues 156 to 176 (THVWMGAMILVLSIVSCISGI). Heme b is bound by residues H157 and E178. Topologically, residues 177-201 (NEKLFFVLKETTNGTKPYSALPPEA) are lumenal. An N-linked (GlcNAc...) asparagine glycan is attached at N189. Residues 202–222 (VAANSLGVIIVAFGLVVLKIL) traverse the membrane as a helical segment. At 223–247 (SNQMWQRPEPGDDEGVYRPLAYDGS) the chain is on the cytoplasmic side. Q228 lines the heme b pocket.

In terms of assembly, homodimer. Heme b serves as cofactor.

The protein resides in the late endosome membrane. Its subcellular location is the lysosome membrane. It carries out the reaction Fe(3+)(out) + L-ascorbate(in) = monodehydro-L-ascorbate radical(in) + Fe(2+)(out) + H(+). Transmembrane reductase that uses ascorbate as an electron donor in the cytoplasm and transfers electrons across membranes to reduce iron cations Fe(3+) into Fe(2+) in the lumen of the late endosome and lysosome. Reduced iron can then be extruded from the late endosome and lysosome to the cytoplasm by divalent metal-specific transporters. It is therefore most probably involved in endosomal and lysosomal cellular iron homeostasis. This is Lysosomal membrane ascorbate-dependent ferrireductase CYB561A3 (cyb561a3a) from Danio rerio (Zebrafish).